The primary structure comprises 379 residues: Cytochrome b (379 aa).

Transmembrane regions (helical) follow at residues 33-53, 77-98, 113-133, and 178-198; these read FGSL…FLAM, WLIR…FIHV, WNIG…GYVL, and FFAF…VHLL. Residues histidine 83 and histidine 97 each contribute to the heme b site. Positions 182 and 196 each coordinate heme b. Histidine 201 provides a ligand contact to a ubiquinone. A run of 4 helical transmembrane segments spans residues 226-246, 288-308, 320-340, and 347-367; these read IKDL…ALFF, LGGV…PLLN, ITQI…WIGG, and FTMI…ILMP.

The protein belongs to the cytochrome b family. As to quaternary structure, the cytochrome bc1 complex contains 11 subunits: 3 respiratory subunits (MT-CYB, CYC1 and UQCRFS1), 2 core proteins (UQCRC1 and UQCRC2) and 6 low-molecular weight proteins (UQCRH/QCR6, UQCRB/QCR7, UQCRQ/QCR8, UQCR10/QCR9, UQCR11/QCR10 and a cleavage product of UQCRFS1). This cytochrome bc1 complex then forms a dimer. The cofactor is heme b.

It localises to the mitochondrion inner membrane. Its function is as follows. Component of the ubiquinol-cytochrome c reductase complex (complex III or cytochrome b-c1 complex) that is part of the mitochondrial respiratory chain. The b-c1 complex mediates electron transfer from ubiquinol to cytochrome c. Contributes to the generation of a proton gradient across the mitochondrial membrane that is then used for ATP synthesis. This is Cytochrome b (MT-CYB) from Akodon dayi (Day's grass mouse).